We begin with the raw amino-acid sequence, 218 residues long: Elongation factor Ts (218 aa).

The interval Thr-82–Val-85 is involved in Mg(2+) ion dislocation from EF-Tu.

This sequence belongs to the EF-Ts family.

It localises to the cytoplasm. In terms of biological role, associates with the EF-Tu.GDP complex and induces the exchange of GDP to GTP. It remains bound to the aminoacyl-tRNA.EF-Tu.GTP complex up to the GTP hydrolysis stage on the ribosome. The polypeptide is Elongation factor Ts (Prochlorococcus marinus (strain MIT 9301)).